Reading from the N-terminus, the 321-residue chain is MAEQVLVGDVGGTNARLALCSLQDGSLSHIKNYSGAEYPSLEAVIRVYLEETAAKVSSACIAIACPITGDWVAMTNHTWAFSQSEMQQNLGLQHLSIINDFTAISMAIPALKDEDKIQFGGEAAQAGKPIAVYGAGTGLGVAHLVHSGEAWMSLPGEGGHVDFAPNSTEEVMVLEALREELGHVSAERLLSGPGLVNIYRGLVLSDDRVPENLQPKDVTERALADEDIDCRRALSLFCVLMGRFGGNLALNLGTFGGVYIAGGIVPRFLEFFKASGFRVAFEDKGRFHSYLEPIPVFLITHEQPGLLGSGAYLRQKLGYKL.

An ATP-binding site is contributed by Gly8–Thr13.

This sequence belongs to the bacterial glucokinase family.

It localises to the cytoplasm. The catalysed reaction is D-glucose + ATP = D-glucose 6-phosphate + ADP + H(+). The protein is Glucokinase of Tolumonas auensis (strain DSM 9187 / NBRC 110442 / TA 4).